Reading from the N-terminus, the 293-residue chain is Ribosomal protein L11 methyltransferase (293 aa).

Thr-145, Gly-166, Asp-188, and Asn-230 together coordinate S-adenosyl-L-methionine.

It belongs to the methyltransferase superfamily. PrmA family.

The protein resides in the cytoplasm. The enzyme catalyses L-lysyl-[protein] + 3 S-adenosyl-L-methionine = N(6),N(6),N(6)-trimethyl-L-lysyl-[protein] + 3 S-adenosyl-L-homocysteine + 3 H(+). Methylates ribosomal protein L11. The polypeptide is Ribosomal protein L11 methyltransferase (Salmonella newport (strain SL254)).